Reading from the N-terminus, the 155-residue chain is Putative pre-16S rRNA nuclease (155 aa).

This sequence belongs to the YqgF nuclease family.

The protein localises to the cytoplasm. Could be a nuclease involved in processing of the 5'-end of pre-16S rRNA. The polypeptide is Putative pre-16S rRNA nuclease (Wolbachia pipientis wMel).